The chain runs to 204 residues: uncharacterized protein (204 aa).

The first 17 residues, 1–17 (MKRLVTGLLALSLFLAA), serve as a signal peptide directing secretion. The tract at residues 17–100 (ACGQDSDQQK…NNNQANNNQK (84 aa)) is disordered. Cys-18 carries N-palmitoyl cysteine lipidation. A lipid anchor (S-diacylglycerol cysteine) is attached at Cys-18. Residues 23–70 (DQQKDGNKEKDDKAKTEQQDKKTNDSSKDKKDNKDDSKDVNKDNKDNS) are compositionally biased toward basic and acidic residues. Over residues 71-100 (ANDNQQQSNSNATNNDQNQTNNNQANNNQK) the composition is skewed to low complexity.

The protein resides in the cell membrane. This is an uncharacterized protein from Staphylococcus aureus (strain MSSA476).